Reading from the N-terminus, the 851-residue chain is Beta-galactosidase 3 (851 aa).

An N-terminal signal peptide occupies residues 1–29 (MAGASSYFSLRRLLLLLLPLVPLLGATTA). Asparagine 35 is a glycosylation site (N-linked (GlcNAc...) asparagine). Glutamate 194 functions as the Proton donor in the catalytic mechanism. The active-site Nucleophile is glutamate 263. 4 N-linked (GlcNAc...) asparagine glycosylation sites follow: asparagine 361, asparagine 475, asparagine 528, and asparagine 533. Residues 765-851 (GRDAAKVQLS…KTLAIEADCS (87 aa)) enclose the SUEL-type lectin domain.

This sequence belongs to the glycosyl hydrolase 35 family.

Its subcellular location is the secreted. The protein localises to the extracellular space. It localises to the apoplast. It catalyses the reaction Hydrolysis of terminal non-reducing beta-D-galactose residues in beta-D-galactosides.. The polypeptide is Beta-galactosidase 3 (Oryza sativa subsp. japonica (Rice)).